A 117-amino-acid polypeptide reads, in one-letter code: Large ribosomal subunit protein eL34 (117 aa).

Serine 12 bears the Phosphoserine mark. An N6-acetyllysine mark is found at lysine 36 and lysine 43. Lysine 108 is covalently cross-linked (Glycyl lysine isopeptide (Lys-Gly) (interchain with G-Cter in SUMO2)).

It belongs to the eukaryotic ribosomal protein eL34 family. In terms of assembly, component of the large ribosomal subunit.

The protein localises to the cytoplasm. Its subcellular location is the cytosol. It is found in the endoplasmic reticulum. In terms of biological role, component of the large ribosomal subunit. The ribosome is a large ribonucleoprotein complex responsible for the synthesis of proteins in the cell. In Mus musculus (Mouse), this protein is Large ribosomal subunit protein eL34 (Rpl34).